Reading from the N-terminus, the 216-residue chain is Probable nicotinate-nucleotide adenylyltransferase (216 aa).

This sequence belongs to the NadD family.

It catalyses the reaction nicotinate beta-D-ribonucleotide + ATP + H(+) = deamido-NAD(+) + diphosphate. It participates in cofactor biosynthesis; NAD(+) biosynthesis; deamido-NAD(+) from nicotinate D-ribonucleotide: step 1/1. Catalyzes the reversible adenylation of nicotinate mononucleotide (NaMN) to nicotinic acid adenine dinucleotide (NaAD). The polypeptide is Probable nicotinate-nucleotide adenylyltransferase (Geotalea daltonii (strain DSM 22248 / JCM 15807 / FRC-32) (Geobacter daltonii)).